The chain runs to 404 residues: Phosphoglycerate kinase (404 aa).

Residues 22-24 (DFN), Arg-37, 60-63 (HLGR), Arg-120, and Arg-160 each bind substrate. ATP is bound by residues Lys-215, Glu-333, and 360-363 (GGDS).

Belongs to the phosphoglycerate kinase family. As to quaternary structure, monomer.

It localises to the cytoplasm. The enzyme catalyses (2R)-3-phosphoglycerate + ATP = (2R)-3-phospho-glyceroyl phosphate + ADP. Its pathway is carbohydrate degradation; glycolysis; pyruvate from D-glyceraldehyde 3-phosphate: step 2/5. This chain is Phosphoglycerate kinase, found in Latilactobacillus sakei subsp. sakei (strain 23K) (Lactobacillus sakei subsp. sakei).